The following is a 173-amino-acid chain: S-ribosylhomocysteine lyase (173 aa).

His54, His58, and Cys128 together coordinate Fe cation.

The protein belongs to the LuxS family. As to quaternary structure, homodimer. It depends on Fe cation as a cofactor.

It carries out the reaction S-(5-deoxy-D-ribos-5-yl)-L-homocysteine = (S)-4,5-dihydroxypentane-2,3-dione + L-homocysteine. In terms of biological role, involved in the synthesis of autoinducer 2 (AI-2) which is secreted by bacteria and is used to communicate both the cell density and the metabolic potential of the environment. The regulation of gene expression in response to changes in cell density is called quorum sensing. Catalyzes the transformation of S-ribosylhomocysteine (RHC) to homocysteine (HC) and 4,5-dihydroxy-2,3-pentadione (DPD). The protein is S-ribosylhomocysteine lyase of Hydrogenovibrio crunogenus (strain DSM 25203 / XCL-2) (Thiomicrospira crunogena).